The following is a 116-amino-acid chain: Large ribosomal subunit protein bL19 (116 aa).

Belongs to the bacterial ribosomal protein bL19 family.

In terms of biological role, this protein is located at the 30S-50S ribosomal subunit interface and may play a role in the structure and function of the aminoacyl-tRNA binding site. The chain is Large ribosomal subunit protein bL19 from Streptomyces griseus subsp. griseus (strain JCM 4626 / CBS 651.72 / NBRC 13350 / KCC S-0626 / ISP 5235).